The sequence spans 115 residues: Large ribosomal subunit protein uL24 (115 aa).

It belongs to the universal ribosomal protein uL24 family. Part of the 50S ribosomal subunit.

One of two assembly initiator proteins, it binds directly to the 5'-end of the 23S rRNA, where it nucleates assembly of the 50S subunit. Functionally, one of the proteins that surrounds the polypeptide exit tunnel on the outside of the subunit. The sequence is that of Large ribosomal subunit protein uL24 from Deinococcus geothermalis (strain DSM 11300 / CIP 105573 / AG-3a).